The following is a 231-amino-acid chain: Eukaryotic translation initiation factor 4E allele A (231 aa).

The segment covering Met-1–Ala-20 has biased composition (basic and acidic residues). Positions Met-1–Glu-36 are disordered. Residues Glu-27–Glu-36 show a composition bias toward acidic residues. EIF4G-binding stretches follow at residues His-56–Glu-59 and Phe-66–His-102. Residues Arg-74–Gly-79, Lys-106, and Trp-124–Glu-125 contribute to the mRNA site. An intrachain disulfide couples Cys-129 to Cys-167. An EIF4G-binding region spans residues Tyr-150–Gln-159. MRNA-binding positions include Arg-174–Lys-179 and Lys-219–Arg-223.

Belongs to the eukaryotic initiation factor 4E family. As to quaternary structure, EIF4F is a multi-subunit complex, the composition of which varies with external and internal environmental conditions. It is composed of at least EIF4A, EIF4E and EIF4G. EIF4E is also known to interact with other partners. In higher plants two isoforms of EIF4F have been identified, named isoform EIF4F and isoform EIF(iso)4F. Isoform EIF4F has subunits p220 and p26, whereas isoform EIF(iso)4F has subunits p82 and p28. In terms of assembly, (Microbial infection) Interacts with viral genome-linked protein (VPg); this interaction is possible in susceptible hosts but impaired in resistant plants. Post-translationally, according to the redox status, the Cys-129-Cys-167 disulfide bridge may have a role in regulating protein function by affecting its ability to bind capped mRNA.

The protein localises to the nucleus. The protein resides in the cytoplasm. Functionally, component of the protein complex eIF4F, which is involved in the recognition of the mRNA cap, ATP-dependent unwinding of 5'-terminal secondary structure and recruitment of mRNA to the ribosome. Recognizes and binds the 7-methylguanosine-containing mRNA cap during an early step in the initiation of protein synthesis and facilitates ribosome binding by inducing the unwinding of the mRNAs secondary structures. Key component of recessive resistance to potyviruses. In terms of biological role, (Microbial infection) Susceptibility host factor required for viral infection (e.g. Potato virus Y (PVY)) by recruiting viral RNAs to the host ribosomal complex via an interaction with viral genome-linked protein (VPg). The polypeptide is Eukaryotic translation initiation factor 4E allele A (Solanum tuberosum (Potato)).